A 177-amino-acid polypeptide reads, in one-letter code: Large ribosomal subunit protein uL6 (177 aa).

Belongs to the universal ribosomal protein uL6 family. Part of the 50S ribosomal subunit.

Functionally, this protein binds to the 23S rRNA, and is important in its secondary structure. It is located near the subunit interface in the base of the L7/L12 stalk, and near the tRNA binding site of the peptidyltransferase center. In Pseudomonas fluorescens (strain SBW25), this protein is Large ribosomal subunit protein uL6.